The chain runs to 331 residues: FMRFamide-related neuropeptides (331 aa).

The N-terminal stretch at 1-25 (MRCWSPCSLLVVIVIYCLSSHTSEA) is a signal peptide. Positions 26–65 (FDLAQACVESQRLSLLPICDTIFAVQQEGAQQSADDGMRS) are excised as a propeptide. Phe-71 and Phe-83 each carry phenylalanine amide. Residues 86–94 (NVPDLPFED) constitute a propeptide that is removed on maturation. Phe-100 is modified (phenylalanine amide). The propeptide occupies 103-168 (AAPQLDDLLK…YIDDVEDSDV (66 aa)). The tract at residues 122 to 158 (QKADETSVRRKRSTDAAPQNNAENPEQKNDSAKITKR) is disordered. Positions 146–158 (PEQKNDSAKITKR) are enriched in basic and acidic residues. Phenylalanine amide occurs at positions 174 and 181. A propeptide spanning residues 184–194 (NPSDAGNKLTE) is cleaved from the precursor. Phe-200 carries the post-translational modification Phenylalanine amide. Residues 203 to 205 (DPE) constitute a propeptide that is removed on maturation. The residue at position 211 (Phe-211) is a Phenylalanine amide. Residues 214 to 216 (SDD) constitute a propeptide that is removed on maturation. Phe-222 is subject to Phenylalanine amide. Positions 225–236 (NPSDVEDELEED) are excised as a propeptide. Phe-242 is subject to Phenylalanine amide. The propeptide occupies 245–254 (GGEDDEEEAE). The residue at position 260 (Phe-260) is a Phenylalanine amide. Residues 263-265 (DPE) constitute a propeptide that is removed on maturation. Phe-271 is modified (phenylalanine amide). Positions 274 to 277 (SGED) are excised as a propeptide. The segment covering 282–296 (RFGRNPDEQEADKRF) has biased composition (basic and acidic residues). Residues 282-310 (RFGRNPDEQEADKRFMRFGRGGEDDEVST) form a disordered region. Phe-283 is subject to Phenylalanine amide. Residues 286–293 (NPDEQEAD) constitute a propeptide that is removed on maturation. A Phenylalanine amide modification is found at Phe-299. The propeptide occupies 302–312 (GGEDDEVSTED). Phe-318 carries the post-translational modification Phenylalanine amide. Positions 321 to 331 (SADKCKGCLEG) are excised as a propeptide.

This sequence belongs to the FARP (FMRFamide related peptide) family.

It localises to the secreted. In terms of biological role, excitatory neurotransmitters that directly modulate chromatophore function by activating chromatophore expansion at the chromatophore neuromuscular junction. In Doryteuthis pealeii (Longfin inshore squid), this protein is FMRFamide-related neuropeptides.